The following is an 878-amino-acid chain: Alanine--tRNA ligase (878 aa).

H562, H566, C670, and H674 together coordinate Zn(2+).

It belongs to the class-II aminoacyl-tRNA synthetase family. Requires Zn(2+) as cofactor.

It is found in the cytoplasm. The enzyme catalyses tRNA(Ala) + L-alanine + ATP = L-alanyl-tRNA(Ala) + AMP + diphosphate. Catalyzes the attachment of alanine to tRNA(Ala) in a two-step reaction: alanine is first activated by ATP to form Ala-AMP and then transferred to the acceptor end of tRNA(Ala). Also edits incorrectly charged Ser-tRNA(Ala) and Gly-tRNA(Ala) via its editing domain. The chain is Alanine--tRNA ligase from Acinetobacter baumannii (strain ACICU).